The primary structure comprises 476 residues: Serine/threonine-protein kinase Chk1 (476 aa).

Residues 1-265 (MAVPFVEDWD…IPDIKKDRWY (265 aa)) form an interaction with CLSPN region. Residues 9–265 (WDLVQTLGEG…IPDIKKDRWY (257 aa)) enclose the Protein kinase domain. Residues 15-23 (LGEGAYGEV) and Lys38 contribute to the ATP site. Residue Asp130 is the Proton acceptor of the active site. Residue Lys132 forms a Glycyl lysine isopeptide (Lys-Gly) (interchain with G-Cter in ubiquitin) linkage. Residues 270–327 (KKGAKRPRVTSGGVSESPSGFSKHIQSNLDFSPVNSASSEENVKYSSSQPEPRTGLSL) are disordered. Ser280, Ser286, Ser296, and Ser301 each carry phosphoserine. The span at 281 to 320 (GGVSESPSGFSKHIQSNLDFSPVNSASSEENVKYSSSQPE) shows a compositional bias: polar residues. Ser317 is subject to Phosphoserine; by ATM and ATR. At Ser331 the chain carries Phosphoserine. Position 345 is a phosphoserine; by ATM and ATR (Ser345). Residues 391–476 (QCLKETCEKL…SSQKIWLPAT (86 aa)) are autoinhibitory region. Lys436 is covalently cross-linked (Glycyl lysine isopeptide (Lys-Gly) (interchain with G-Cter in ubiquitin)). A phosphoserine mark is found at Ser467 and Ser468.

This sequence belongs to the protein kinase superfamily. CAMK Ser/Thr protein kinase family. NIM1 subfamily. In terms of assembly, interacts (phosphorylated by ATR) with RAD51. Interacts with and phosphorylates CLSPN, an adapter protein that regulates the ATR-dependent phosphorylation of CHEK1. Interacts with BRCA1. Interacts with and phosphorylates CDC25A, CDC25B and CDC25C. Interacts with FBXO6, which regulates CHEK1. Interacts with PPM1D, which regulates CHEK1 through dephosphorylation. Interacts with TIMELESS; DNA damage-dependent. Interacts with FEM1B; activates CHEK1 in response to stress. Interacts with TLK1. Interacts with XPO1 and YWHAZ. Interacts with CDK5RAP3; antagonizes CHEK1. As to quaternary structure, isoform 1 associates with isoform 2, the interaction is disrupted upon phosphorylation by ATR. Post-translationally, phosphorylated by ATR in a RAD17-dependent manner in response to ultraviolet irradiation and inhibition of DNA replication. Phosphorylated by ATM in response to ionizing irradiation. ATM and ATR can both phosphorylate Ser-317 and Ser-345 and this results in enhanced kinase activity. Phosphorylation at Ser-345 induces a change in the conformation of the protein, activates the kinase activity and is a prerequisite for interaction with FBXO6 and subsequent ubiquitination at Lys-436. Phosphorylation at Ser-345 also increases binding to 14-3-3 proteins and promotes nuclear retention. Conversely, dephosphorylation at Ser-345 by PPM1D may contribute to exit from checkpoint mediated cell cycle arrest. Phosphorylation at Ser-280 by AKT1/PKB, may promote mono and/or diubiquitination. Also phosphorylated at undefined residues during mitotic arrest, resulting in decreased activity. In terms of processing, ubiquitinated. Mono or diubiquitination promotes nuclear exclusion. The activated form (phosphorylated on Ser-345) is polyubiquitinated at Lys-436 by some SCF-type E3 ubiquitin ligase complex containing FBXO6 promoting its degradation. Ubiquitination and degradation are required to terminate the checkpoint and ensure that activated CHEK1 does not accumulate as cells progress through S phase, when replication forks encounter transient impediments during normal DNA replication. 'Lys-63'-mediated ubiquitination by TRAF4 at Lys-132 activates cell cycle arrest and activation of DNA repair. Proteolytically cleaved at the C-terminus by SPRTN during normal DNA replication, thereby promoting CHEK1 removal from chromatin and activating the protein kinase activity. In terms of tissue distribution, expressed ubiquitously with the most abundant expression in thymus, testis, small intestine and colon.

It is found in the nucleus. It localises to the chromosome. The protein resides in the cytoplasm. The protein localises to the cytoskeleton. Its subcellular location is the microtubule organizing center. It is found in the centrosome. The catalysed reaction is L-seryl-[protein] + ATP = O-phospho-L-seryl-[protein] + ADP + H(+). It carries out the reaction L-threonyl-[protein] + ATP = O-phospho-L-threonyl-[protein] + ADP + H(+). With respect to regulation, activated through phosphorylation predominantly by ATR but also by ATM in response to DNA damage or inhibition of DNA replication. Activation is modulated by several mediators including CLSPN, BRCA1 and FEM1B. Proteolytic cleavage at the C-terminus by SPRTN during normal DNA replication activates the protein kinase activity. Serine/threonine-protein kinase which is required for checkpoint-mediated cell cycle arrest and activation of DNA repair in response to the presence of DNA damage or unreplicated DNA. May also negatively regulate cell cycle progression during unperturbed cell cycles. This regulation is achieved by a number of mechanisms that together help to preserve the integrity of the genome. Recognizes the substrate consensus sequence [R-X-X-S/T]. Binds to and phosphorylates CDC25A, CDC25B and CDC25C. Phosphorylation of CDC25A at 'Ser-178' and 'Thr-507' and phosphorylation of CDC25C at 'Ser-216' creates binding sites for 14-3-3 proteins which inhibit CDC25A and CDC25C. Phosphorylation of CDC25A at 'Ser-76', 'Ser-124', 'Ser-178', 'Ser-279' and 'Ser-293' promotes proteolysis of CDC25A. Phosphorylation of CDC25A at 'Ser-76' primes the protein for subsequent phosphorylation at 'Ser-79', 'Ser-82' and 'Ser-88' by NEK11, which is required for polyubiquitination and degradation of CDCD25A. Inhibition of CDC25 leads to increased inhibitory tyrosine phosphorylation of CDK-cyclin complexes and blocks cell cycle progression. Also phosphorylates NEK6. Binds to and phosphorylates RAD51 at 'Thr-309', which promotes the release of RAD51 from BRCA2 and enhances the association of RAD51 with chromatin, thereby promoting DNA repair by homologous recombination. Phosphorylates multiple sites within the C-terminus of TP53, which promotes activation of TP53 by acetylation and promotes cell cycle arrest and suppression of cellular proliferation. Also promotes repair of DNA cross-links through phosphorylation of FANCE. Binds to and phosphorylates TLK1 at 'Ser-743', which prevents the TLK1-dependent phosphorylation of the chromatin assembly factor ASF1A. This may enhance chromatin assembly both in the presence or absence of DNA damage. May also play a role in replication fork maintenance through regulation of PCNA. May regulate the transcription of genes that regulate cell-cycle progression through the phosphorylation of histones. Phosphorylates histone H3.1 (to form H3T11ph), which leads to epigenetic inhibition of a subset of genes. May also phosphorylate RB1 to promote its interaction with the E2F family of transcription factors and subsequent cell cycle arrest. Phosphorylates SPRTN, promoting SPRTN recruitment to chromatin. Reduces replication stress and activates the G2/M checkpoint, by phosphorylating and inactivating PABIR1/FAM122A and promoting the serine/threonine-protein phosphatase 2A-mediated dephosphorylation and stabilization of WEE1 levels and activity. Functionally, endogenous repressor of isoform 1, interacts with, and antagonizes CHK1 to promote the S to G2/M phase transition. This is Serine/threonine-protein kinase Chk1 (CHEK1) from Homo sapiens (Human).